A 261-amino-acid polypeptide reads, in one-letter code: tRNA 5-carboxymethoxyuridine methyltransferase (261 aa).

Residues arginine 26, glycine 52–glycine 53, aspartate 73, alanine 102–glutamine 103, and histidine 119 contribute to the S-adenosyl-L-methionine site.

Belongs to the class I-like SAM-binding methyltransferase superfamily. CmoM family. As to quaternary structure, homodimer.

It carries out the reaction 5-carboxymethoxyuridine(34) in tRNA + S-adenosyl-L-methionine = 5-methoxycarbonylmethoxyuridine(34) in tRNA + S-adenosyl-L-homocysteine. Functionally, catalyzes the methylation of 5-carboxymethoxyuridine (cmo5U) to form 5-methoxycarbonylmethoxyuridine (mcmo5U) at position 34 in tRNAs. This chain is tRNA 5-carboxymethoxyuridine methyltransferase, found in Escherichia coli O157:H7.